The primary structure comprises 845 residues: Alanine--tRNA ligase (845 aa).

4 residues coordinate Zn(2+): histidine 552, histidine 556, cysteine 653, and histidine 657.

Belongs to the class-II aminoacyl-tRNA synthetase family. Zn(2+) serves as cofactor.

It is found in the cytoplasm. The enzyme catalyses tRNA(Ala) + L-alanine + ATP = L-alanyl-tRNA(Ala) + AMP + diphosphate. Functionally, catalyzes the attachment of alanine to tRNA(Ala) in a two-step reaction: alanine is first activated by ATP to form Ala-AMP and then transferred to the acceptor end of tRNA(Ala). Also edits incorrectly charged Ser-tRNA(Ala) and Gly-tRNA(Ala) via its editing domain. This Campylobacter fetus subsp. fetus (strain 82-40) protein is Alanine--tRNA ligase.